The primary structure comprises 122 residues: Glycine cleavage system H protein (122 aa).

Residues I22 to E103 enclose the Lipoyl-binding domain. At K63 the chain carries N6-lipoyllysine.

It belongs to the GcvH family. The glycine cleavage system is composed of four proteins: P, T, L and H. (R)-lipoate serves as cofactor.

In terms of biological role, the glycine cleavage system catalyzes the degradation of glycine. The H protein shuttles the methylamine group of glycine from the P protein to the T protein. This chain is Glycine cleavage system H protein, found in Treponema denticola (strain ATCC 35405 / DSM 14222 / CIP 103919 / JCM 8153 / KCTC 15104).